A 2005-amino-acid polypeptide reads, in one-letter code: Sodium channel protein type 2 subunit alpha (2005 aa).

Residues 1–129 lie on the Cytoplasmic side of the membrane; the sequence is MARSVLVPPG…KLAIKILVHS (129 aa). At Ser-4 the chain carries Phosphoserine. The interval 28-61 is disordered; it reads RIAEEKAKRPKQERKDEDDENGPKPNSDLEAGKS. Lys-38 participates in a covalent cross-link: Glycyl lysine isopeptide (Lys-Gly) (interchain with G-Cter in SUMO1). One copy of the I repeat lies at 111–456; sequence ILTPFNPIRK…QQMLEQLKKQ (346 aa). A helical transmembrane segment spans residues 130–148; it reads LFNVLIMCTILTNCVFMTM. The Extracellular portion of the chain corresponds to 149–155; the sequence is SNPPDWT. The helical transmembrane segment at 156–176 threads the bilayer; it reads KNVEYTFTGIYTFESLIKILA. The Cytoplasmic portion of the chain corresponds to 177-190; that stretch reads RGFCLEDFTFLRNP. A helical transmembrane segment spans residues 191-208; it reads WNWLDFTVITFAYVTEFV. Residues 209–214 lie on the Extracellular side of the membrane; the sequence is NLGNVS. Asn-212 carries N-linked (GlcNAc...) asparagine glycosylation. The chain crosses the membrane as a helical span at residues 215-231; that stretch reads ALRTFRVLRALKTISVI. The Cytoplasmic segment spans residues 232 to 250; that stretch reads PGLKTIVGALIQSVKKLSD. A helical transmembrane segment spans residues 251–270; that stretch reads VMILTVFCLSVFALIGLQLF. Residues 271–369 are Extracellular-facing; the sequence is MGNLRNKCLQ…PNYGYTSFDT (99 aa). A disulfide bond links Cys-278 and Cys-338. N-linked (GlcNAc...) asparagine glycans are attached at residues Asn-285, Asn-291, Asn-297, Asn-303, Asn-308, and Asn-340. The pore-forming intramembrane region spans 370–394; it reads FSWAFLSLFRLMTQDFWENLYQLTL. The Extracellular segment spans residues 395-401; sequence RAAGKTY. The chain crosses the membrane as a helical span at residues 402-422; it reads MIFFVLVIFLGSFYLINLILA. The Cytoplasmic segment spans residues 423-759; that stretch reads VVAMAYEEQN…HVVNLVVMDP (337 aa). 9 positions are modified to phosphoserine: Ser-468, Ser-471, Ser-484, Ser-526, Ser-528, Ser-531, Ser-553, Ser-554, and Ser-558. The tract at residues 494–529 is disordered; that stretch reads SSKSEKELKNRRKKKKQKEQAGEEEKEDAVRKSASE. Over residues 511–529 the composition is skewed to basic and acidic residues; sequence KEQAGEEEKEDAVRKSASE. At Ser-554 the chain carries Phosphoserine; by PKC; in vitro. A phosphoserine; by PKC; in vitro mark is found at Ser-573 and Ser-576. Ser-589, Ser-610, Ser-623, Ser-687, Ser-688, and Ser-721 each carry phosphoserine. The disordered stretch occupies residues 591–634; sequence NDFADDEHSTFEDNDSRRDSLFVPHRHGERRPSNVSQASRASRG. Residues 596–610 show a composition bias toward basic and acidic residues; that stretch reads DEHSTFEDNDSRRDS. Residues 741-1013 form an II repeat; sequence CCKPWLKVKH…QIAVGRMQKG (273 aa). Residues 760 to 778 form a helical membrane-spanning segment; that stretch reads FVDLAITICIVLNTLFMAM. Over 779 to 789 the chain is Extracellular; sequence EHYPMTEQFSS. A helical transmembrane segment spans residues 790 to 809; sequence VLSVGNLVFTGIFTAEMFLK. Over 810 to 823 the chain is Cytoplasmic; the sequence is IIAMDPYYYFQEGW. The chain crosses the membrane as a helical span at residues 824–843; it reads NIFDGFIVSLSLMELGLANV. The Extracellular portion of the chain corresponds to 844-845; sequence EG. The helical transmembrane segment at 846 to 863 threads the bilayer; sequence LSVLRSFRLLRVFKLAKS. Topologically, residues 864–879 are cytoplasmic; sequence WPTLNMLIKIIGNSVG. The helical transmembrane segment at 880–898 threads the bilayer; it reads ALGNLTLVLAIIVFIFAVV. At 899–927 the chain is on the extracellular side; it reads GMQLFGKSYKECVCKISNDCELPRWHMHH. The cysteines at positions 912 and 918 are disulfide-linked. The binds SCN2B stretch occupies residues 917-918; the sequence is DC. The segment at residues 928–948 is an intramembrane region (pore-forming); sequence FFHSFLIVFRVLCGEWIETMW. Residues 949 to 961 lie on the Extracellular side of the membrane; it reads DCMEVAGQTMCLT. Residues Cys-950 and Cys-959 are joined by a disulfide bond. A helical transmembrane segment spans residues 962 to 982; sequence VFMMVMVIGNLVVLNLFLALL. Residues 983-1209 lie on the Cytoplasmic side of the membrane; the sequence is LSSFSSDNLA…TCYKIVEHNW (227 aa). A disordered region spans residues 1120–1166; the sequence is EEFSSESDMEESKEKLNATSSSEGSTVDIGAPAEGEQPEAEPEESLE. Acidic residues predominate over residues 1155–1166; that stretch reads EQPEAEPEESLE. One copy of the III repeat lies at 1190–1504; it reads KGKLWWNLRK…KKYYNAMKKL (315 aa). Residues 1210-1227 form a helical membrane-spanning segment; the sequence is FETFIVFMILLSSGALAF. Topologically, residues 1228–1240 are extracellular; sequence EDIYIEQRKTIKT. Residues 1241 to 1259 form a helical membrane-spanning segment; the sequence is MLEYADKVFTYIFILEMLL. At 1260 to 1273 the chain is on the cytoplasmic side; sequence KWVAYGFQMYFTNA. Residues 1274–1292 traverse the membrane as a helical segment; the sequence is WCWLDFLIVDVSLVSLTAN. Residues 1293-1300 are Extracellular-facing; sequence ALGYSELG. Residues 1301-1319 form a helical membrane-spanning segment; that stretch reads AIKSLRTLRALRPLRALSR. Residues 1320-1336 lie on the Cytoplasmic side of the membrane; that stretch reads FEGMRVVVNALLGAIPS. Residues 1337–1356 traverse the membrane as a helical segment; that stretch reads IMNVLLVCLIFWLIFSIMGV. Residues 1357–1408 are Extracellular-facing; that stretch reads NLFAGKFYHCINYTTGEMFDVSVVNNYSECQALIESNQTARWKNVKVNFDNV. Cys-1366 and Cys-1386 form a disulfide bridge. N-linked (GlcNAc...) asparagine glycans are attached at residues Asn-1368, Asn-1382, and Asn-1393. Positions 1409 to 1430 form an intramembrane region, pore-forming; sequence GLGYLSLLQVATFKGWMDIMYA. The Extracellular segment spans residues 1431-1447; it reads AVDSRNVELQPKYEDNL. A helical membrane pass occupies residues 1448-1469; sequence YMYLYFVIFIIFGSFFTLNLFI. Over 1470-1532 the chain is Cytoplasmic; it reads GVIIDNFNQQ…MVFDFVTKQV (63 aa). Ser-1506 bears the Phosphoserine; by PKC mark. The stretch at 1513–1811 is one IV repeat; it reads IPRPANKFQG…WEKFDPDATQ (299 aa). The chain crosses the membrane as a helical span at residues 1533–1550; sequence FDISIMILICLNMVTMMV. Over 1551–1561 the chain is Extracellular; that stretch reads ETDDQSQEMTN. Residues 1562–1580 traverse the membrane as a helical segment; the sequence is ILYWINLVFIVLFTGECVL. The Cytoplasmic segment spans residues 1581–1592; that stretch reads KLISLRHYYFTI. The chain crosses the membrane as a helical span at residues 1593 to 1610; that stretch reads GWNIFDFVVVILSIVGMF. Residues 1611 to 1623 lie on the Extracellular side of the membrane; it reads LAELIEKYFVSPT. The chain crosses the membrane as a helical span at residues 1624–1640; the sequence is LFRVIRLARIGRILRLI. Residues 1641–1659 lie on the Cytoplasmic side of the membrane; the sequence is KGAKGIRTLLFALMMSLPA. A helical transmembrane segment spans residues 1660 to 1677; the sequence is LFNIGLLLFLVMFIYAIF. Over 1678-1699 the chain is Extracellular; the sequence is GMSNFAYVKREVGIDDMFNFET. The segment at residues 1700–1722 is an intramembrane region (pore-forming); sequence FGNSMICLFQITTSAGWDGLLAP. The Extracellular segment spans residues 1723–1752; that stretch reads ILNSGPPDCDPEKDHPGSSVKGDCGNPSVG. Cys-1731 and Cys-1746 form a disulfide bridge. The chain crosses the membrane as a helical span at residues 1753–1775; the sequence is IFFFVSYIIISFLVVVNMYIAVI. The Cytoplasmic portion of the chain corresponds to 1776–2005; that stretch reads LENFSVATEE…KGKDIRESKK (230 aa). The IQ domain maps to 1905–1934; the sequence is EEVSAIVIQRAYRRYLLKQKVKKVSSIYKK. Phosphoserine is present on Ser-1930. Positions 1933–1964 are enriched in basic and acidic residues; sequence KKDKGKEDEGTPIKEDIITDKLNENSTPEKTD. Residues 1933 to 2005 form a disordered region; sequence KKDKGKEDEG…KGKDIRESKK (73 aa). Residues Thr-1943, Thr-1963, and Thr-1966 each carry the phosphothreonine modification. Ser-1971 is modified (phosphoserine). Residues 1979 to 2005 are compositionally biased toward basic and acidic residues; that stretch reads TKPEKEKFEKDKSEKEDKGKDIRESKK.

Belongs to the sodium channel (TC 1.A.1.10) family. Nav1.2/SCN2A subfamily. Heterooligomer of a large alpha subunit and a smaller beta subunit. Heterooligomer with SCN2B or SCN4B; disulfide-linked. Heterooligomer with SCN1B or SCN3B; non-covalently linked. Interacts with NEDD4L. Interacts with CALM. Interacts with TMEM233. Interacts with the conotoxin GVIIJ. Interacts with the scorpion toxin BMK M1. Post-translationally, may be ubiquitinated by NEDD4L; which would promote its endocytosis. In terms of processing, phosphorylation at Ser-1506 by PKC in a highly conserved cytoplasmic loop slows inactivation of the sodium channel and reduces peak sodium currents. Sumoylated at Lys-38. Sumoylation is induced by hypoxia, increases voltage-gated sodium current and mediates the early response to acute hypoxia in neurons. Sumoylated SCN2A is located at the cell membrane. As to expression, expressed in brain (at protein level). Expressed in cerebellar granule neurons (at protein level).

The protein resides in the cell membrane. It catalyses the reaction Na(+)(in) = Na(+)(out). Its function is as follows. Mediates the voltage-dependent sodium ion permeability of excitable membranes. Assuming opened or closed conformations in response to the voltage difference across the membrane, the protein forms a sodium-selective channel through which Na(+) ions may pass in accordance with their electrochemical gradient. Implicated in the regulation of hippocampal replay occurring within sharp wave ripples (SPW-R) important for memory. The polypeptide is Sodium channel protein type 2 subunit alpha (Rattus norvegicus (Rat)).